Reading from the N-terminus, the 265-residue chain is Serine protease harobin (265 aa).

An N-terminal signal peptide occupies residues 1-18 (MPLIRVLASLLILQLSYG). Positions 19-33 (KSLDNGAKAITSLDR) are excised as a propeptide. In terms of domain architecture, Peptidase S1 spans 34 to 257 (IIGGFECNPS…YKDWIEGIIA (224 aa)). Intrachain disulfides connect Cys40/Cys172, Cys59/Cys75, Cys106/Cys152, Cys107/Cys264, Cys151/Cys218, Cys183/Cys197, and Cys208/Cys233. Catalysis depends on His74, which acts as the Charge relay system. N-linked (GlcNAc...) asparagine glycosylation is present at Asn112. Residue Asp119 is the Charge relay system of the active site. An N-linked (GlcNAc...) asparagine glycan is attached at Asn130. Ser212 functions as the Charge relay system in the catalytic mechanism.

This sequence belongs to the peptidase S1 family. Snake venom subfamily. As to quaternary structure, monomer. In terms of processing, harobin contains three additional Cys residues than other snake venom serine proteases, suggesting an additional disulfide bond. In addition, it is more stable than other snake 6-disulfide-bond serine proteases, since it is less sensitive to DTT. Expressed by the venom gland.

The protein resides in the secreted. Inhibited by PMSF. In terms of biological role, serine protein with fibrinolytic and fibrinogenolytic activities. Degrades Bbeta-chain (FGB) of fibrinogen first and then the Aalpha-chain (FGA). Gamma-chain (FGG) are also digested on prolonged incubation. In vitro, it cleaves high molecular weight (HMW) kininogen (KNG) releasing bradykinin that promotes vasodilation. In vitro and in vivo, it cleaves angiotensin-2 (AGT). This explains the reduction of blood pressure in hypertensive rats. Also has antithrombotic effects on thrombosis animal models. This chain is Serine protease harobin, found in Hydrophis hardwickii (Hardwick's spine-bellied seasnake).